The sequence spans 513 residues: uncharacterized protein (513 aa).

In terms of domain architecture, CYTH spans 11 to 219; the sequence is HLEVERKFDV…SKLARVLGAT (209 aa). The CHAD domain occupies 228 to 506; the sequence is PQPPADPVHR…LEAALRKLDK (279 aa).

This is an uncharacterized protein from Mycobacterium tuberculosis (strain ATCC 25618 / H37Rv).